The primary structure comprises 305 residues: Flavin-dependent thymidylate synthase (305 aa).

Residues 50-261 (GFVRLIDYLG…PCATASFENH (212 aa)) enclose the ThyX domain. FAD is bound by residues Ser96, 119–121 (RHR), and Glu127. DUMP is bound by residues 116-119 (QWMR), 127-131 (EVSSR), and Arg200. The short motif at 119 to 129 (RHRTARISEVS) is the ThyX motif element. Residues 216-218 (DLH) and His222 each bind FAD. Position 227 (Arg227) interacts with dUMP. Arg227 serves as the catalytic Involved in ionization of N3 of dUMP, leading to its activation.

Belongs to the thymidylate synthase ThyX family. As to quaternary structure, homotetramer. Requires FAD as cofactor.

It catalyses the reaction dUMP + (6R)-5,10-methylene-5,6,7,8-tetrahydrofolate + NADPH + H(+) = dTMP + (6S)-5,6,7,8-tetrahydrofolate + NADP(+). It functions in the pathway pyrimidine metabolism; dTTP biosynthesis. In terms of biological role, catalyzes the reductive methylation of 2'-deoxyuridine-5'-monophosphate (dUMP) to 2'-deoxythymidine-5'-monophosphate (dTMP) while utilizing 5,10-methylenetetrahydrofolate (mTHF) as the methyl donor, and NADPH and FADH(2) as the reductant. The sequence is that of Flavin-dependent thymidylate synthase from Treponema pallidum (strain Nichols).